A 192-amino-acid polypeptide reads, in one-letter code: uncharacterized protein (192 aa).

Residues Asn-71–Gln-100 are disordered. The segment covering Pro-77 to Pro-91 has biased composition (pro residues).

This is an uncharacterized protein from Caenorhabditis elegans.